The following is a 487-amino-acid chain: ATP synthase subunit beta (487 aa).

164–171 (GGAGVGKT) is a binding site for ATP.

It belongs to the ATPase alpha/beta chains family. F-type ATPases have 2 components, CF(1) - the catalytic core - and CF(0) - the membrane proton channel. CF(1) has five subunits: alpha(3), beta(3), gamma(1), delta(1), epsilon(1). CF(0) has four main subunits: a(1), b(1), b'(1) and c(9-12).

The protein resides in the cellular thylakoid membrane. The catalysed reaction is ATP + H2O + 4 H(+)(in) = ADP + phosphate + 5 H(+)(out). In terms of biological role, produces ATP from ADP in the presence of a proton gradient across the membrane. The catalytic sites are hosted primarily by the beta subunits. This Synechococcus sp. (strain WH7803) protein is ATP synthase subunit beta.